The chain runs to 794 residues: Elongator complex protein 2 (794 aa).

WD repeat units lie at residues 55-93 (EHTK…TTKS), 98-140 (GHTS…YVCF), 147-188 (DGFC…AGEG), 203-244 (GHED…KEQM), 286-328 (GHEG…IWLE), 337-376 (GNSV…PQLW), 384-423 (GHYG…GANP), 433-472 (IHGY…ENFR), 557-601 (GHGY…QIQK), 604-643 (GHQL…VSYQ), 654-693 (VHTR…KESS), 705-751 (LKNE…WKLL), and 759-794 (AHHL…IKLT).

It belongs to the WD repeat ELP2 family. As to quaternary structure, component of the elongator complex composed of Elp1, Elp2, Elp3, Elp4, Elp5 and Elp6. The elongator complex associates with and stabilizes microtubules; efficient interaction requires the full complex.

It is found in the cytoplasm. It localises to the nucleus. The protein localises to the cytoskeleton. Its subcellular location is the spindle. It participates in tRNA modification; 5-methoxycarbonylmethyl-2-thiouridine-tRNA biosynthesis. Functionally, component of the elongator complex, which is required for multiple tRNA modifications, including mcm5U (5-methoxycarbonylmethyl uridine), mcm5s2U (5-methoxycarbonylmethyl-2-thiouridine), and ncm5U (5-carbamoylmethyl uridine). The elongator complex catalyzes the formation of carboxymethyluridine in the wobble base at position 34 in tRNAs. Binding by the elongator complex stabilizes microtubules and promotes their growth. This induces central spindle asymmetry, promoting polarized signaling endosome trafficking during asymmetric cell division and cell fate assignation of sensory organ precursor cells. Involved in the regulation of the STAT pathway. This Drosophila melanogaster (Fruit fly) protein is Elongator complex protein 2.